A 586-amino-acid chain; its full sequence is Clathrin heavy chain linker domain-containing protein 1 (586 aa).

The stretch at 174–232 forms a coiled coil; it reads MNLDALTKYMKHLEDKYAEIKQAMLIKYVPAQRKADLDEEMIVLLKRRDVAENLNKKLQ.

This is Clathrin heavy chain linker domain-containing protein 1 (CLHC1) from Homo sapiens (Human).